A 1363-amino-acid polypeptide reads, in one-letter code: Clustered mitochondria protein homolog (1363 aa).

TPR repeat units follow at residues 29–63 (LPSFFNVGDDYLTIPSSYEENIADLKQALNIIVLC) and 120–154 (KEKSYNLASIYEQISRFREVIGLHYIDRLSNDIGS). Residues 172-191 (KEAKKEESTEKEQQEKEELS) form a disordered region. The stretch at 283 to 316 (STINFNPTIKINEKGKFNKSYLLYDLVCQLSPLF) is one TPR 3 repeat. Residues 361-631 (DLSRSQLSSL…RTTPRDIEFI (271 aa)) enclose the Clu domain. Residues 521–544 (PVITSPTTDAEGKNEAEEPESEPV) are disordered. One copy of the TPR 4 repeat lies at 548–581 (VYGLSSDGSRILEDKSFEEPLKQIGDFFHLKPHK). Positions 799–832 (AKAEKKREEEKEKEEKEATESEDKKEKKEDKEDA) are enriched in basic and acidic residues. A disordered region spans residues 799-844 (AKAEKKREEEKEKEEKEATESEDKKEKKEDKEDAEKEEAEAEEEVP). Acidic residues predominate over residues 833-842 (EKEEAEAEEE). TPR repeat units follow at residues 1057–1090 (VEEIYSNARSHLVQGNKEMGMALFNELLAINESI), 1141–1174 (ITAYMNSAYYESSNEQYLNSLKLYKEAMNTWSLV), 1183–1216 (INTLTNLSESLLKIKAYDSALELLQEALEITKKL), and 1225–1258 (GFIYYRIANIVVTLNKFKESKELFDKAYDIFMKL). Residues 1291–1363 (QQETQKKSKT…SGSKKSNKKK (73 aa)) are disordered. Polar residues predominate over residues 1330 to 1342 (PPQSNPEIANQSI).

This sequence belongs to the CLU family. May associate with the eukaryotic translation initiation factor 3 (eIF-3) complex.

The protein resides in the cytoplasm. Functionally, mRNA-binding protein involved in proper cytoplasmic distribution of mitochondria. In Candida albicans (strain SC5314 / ATCC MYA-2876) (Yeast), this protein is Clustered mitochondria protein homolog.